A 126-amino-acid chain; its full sequence is MAREFKRSDRVAQEIQKEVAVILQREVKDPRIGMVTVSDVEISSDLAYAKIFVTFLFDQDENVIEQGMKGLEKASPYIRSLLGKVMRLRIVPELRFIYDQSLVDGMRMSNLVTNVVREDEKRHVEE.

Belongs to the RbfA family. Monomer. Binds 30S ribosomal subunits, but not 50S ribosomal subunits or 70S ribosomes.

The protein localises to the cytoplasm. Its function is as follows. One of several proteins that assist in the late maturation steps of the functional core of the 30S ribosomal subunit. Associates with free 30S ribosomal subunits (but not with 30S subunits that are part of 70S ribosomes or polysomes). Required for efficient processing of 16S rRNA. May interact with the 5'-terminal helix region of 16S rRNA. The polypeptide is Ribosome-binding factor A (Histophilus somni (strain 129Pt) (Haemophilus somnus)).